The sequence spans 228 residues: U1 small nuclear ribonucleoprotein C (228 aa).

The Matrin-type zinc finger occupies 4-36; sequence YYCEYCDIYLTHSSPVGRRQHVQGRKHISAKIE. Positions 179–190 are enriched in basic and acidic residues; the sequence is LVKDNPNEERNG. The segment at 179–228 is disordered; the sequence is LVKDNPNEERNGDSAIANQPSTMHHEEDQDDPANATGGTANNNDNVSINA. Positions 211–221 are enriched in low complexity; that stretch reads ANATGGTANNN.

The protein belongs to the U1 small nuclear ribonucleoprotein C family. U1 snRNP is composed of the 7 core Sm proteins B/B', D1, D2, D3, E, F and G that assemble in a heptameric protein ring on the Sm site of the small nuclear RNA to form the core snRNP, and at least 3 U1 snRNP-specific proteins U1-70K, U1-A and U1-C. U1-C interacts with U1 snRNA and the 5' splice-site region of the pre-mRNA.

The protein localises to the nucleus. Component of the spliceosomal U1 snRNP, which is essential for recognition of the pre-mRNA 5' splice-site and the subsequent assembly of the spliceosome. U1-C is directly involved in initial 5' splice-site recognition for both constitutive and regulated alternative splicing. The interaction with the 5' splice-site seems to precede base-pairing between the pre-mRNA and the U1 snRNA. Stimulates commitment or early (E) complex formation by stabilizing the base pairing of the 5' end of the U1 snRNA and the 5' splice-site region. This chain is U1 small nuclear ribonucleoprotein C, found in Plasmodium knowlesi (strain H).